Consider the following 322-residue polypeptide: Corticotropin-releasing factor-binding protein (322 aa).

The N-terminal stretch at 1 to 24 is a signal peptide; it reads MSPNFKLQCHFILIFLTALRGESR. 5 disulfides stabilise this stretch: cysteine 60-cysteine 81, cysteine 104-cysteine 141, cysteine 183-cysteine 205, cysteine 237-cysteine 264, and cysteine 277-cysteine 318. N-linked (GlcNAc...) asparagine glycosylation is present at asparagine 204.

It belongs to the CRF-binding protein family.

It is found in the secreted. Binds CRF and inactivates it. May prevent inappropriate pituitary-adrenal stimulation in pregnancy. The chain is Corticotropin-releasing factor-binding protein (CRHBP) from Homo sapiens (Human).